The chain runs to 88 residues: UPF0298 protein BcerKBAB4_3759 (88 aa).

The protein belongs to the UPF0298 family.

It is found in the cytoplasm. The protein is UPF0298 protein BcerKBAB4_3759 of Bacillus mycoides (strain KBAB4) (Bacillus weihenstephanensis).